Consider the following 381-residue polypeptide: MPFSNSHNLLKMKYSVDDEYPDLSVHNNHMAKVLTLDLYKKLRDRQTSSGFTLDDVIQTGVDNPGHPFIMTVGCVAGDEESYEVFKELFDPVIEDRHGGYKPTDEHKTDLNADNLQGGDDLDPNYVLSSRVRTGRSIRGFCLPPHCSRGERRAIEKLSVEALGSLGGDLKGKYYALRNMTDAEQQQLIDDHFLFDKPVSPLLLASGMARDWPDARGIWHNDNKTFLVWINEEDHLRVISMQKGGNMKEVFTRFCTGLTQIETLFKSKNYEFMWNPHLGYILTCPSNLGTGLRAGVHIKLPNLGKHEKFGEVLKRLRLQKRGTGGVDTAAVGGVFDVSNADRLGFSEVELVQMVVDGVKLLIEMEKRLEKGQSIDDLMPAQK.

The 88-residue stretch at Lys11–Gly98 folds into the Phosphagen kinase N-terminal domain. Val72 contacts creatine. Positions Tyr125–Leu367 constitute a Phosphagen kinase C-terminal domain. Residues Ser128 to Arg132, Arg130, Arg132, and His191 each bind ATP. Glu232 is a binding site for creatine. Arg236 is a binding site for ATP. A Phosphothreonine; by autocatalysis modification is found at Thr282. Ser285 contacts creatine. Ser285 is subject to Phosphoserine; by autocatalysis. Thr289 carries the post-translational modification Phosphothreonine; by autocatalysis. Residues Arg292, Arg320, Arg320–Val325, and Asp335 each bind ATP.

Belongs to the ATP:guanido phosphotransferase family. Dimer of identical or non-identical chains, which can be either B (brain type) or M (muscle type). With MM being the major form in skeletal muscle and myocardium, MB existing in myocardium, and BB existing in many tissues, especially brain. Post-translationally, ba-CK and Bb-CK are phosphorylated. In terms of processing, the N-terminus of BA-CK is blocked. In terms of tissue distribution, expressed in almost all tissues and found enriched in various region of the brain, retina, heart, gizzard, gut and sperm.

It localises to the cytoplasm. It is found in the cytosol. The protein localises to the mitochondrion. The protein resides in the cell membrane. It carries out the reaction creatine + ATP = N-phosphocreatine + ADP + H(+). Functionally, reversibly catalyzes the transfer of phosphate between ATP and various phosphogens (e.g. creatine phosphate). Creatine kinase isoenzymes play a central role in energy transduction in tissues with large, fluctuating energy demands, such as skeletal muscle, heart, brain and spermatozoa. In Gallus gallus (Chicken), this protein is Creatine kinase B-type.